Reading from the N-terminus, the 524-residue chain is Probable lipid II flippase MurJ (524 aa).

13 helical membrane-spanning segments follow: residues 44–64 (IFGAGMATDAFFVAFKLPNLL), 103–123 (LLTLALAVVTVAGMLAAPWVI), 146–166 (ITFPYILLISLASLVGAILNT), 172–192 (IPAFAPTFLNISMIGFALFAA), 195–215 (FNPPVLALAWAVTVGGVLQLV), 250–270 (ILGVSVSQISLIINTIFASFL), 284–304 (LMEFPSGVLGVALGTILLPSL), 322–342 (WGLRLCFLLALPSAVALGILA), 367–387 (LIAYSVGLIGLIVVKVLAPGF), 396–416 (PVKIAIVTLIMTQLMNLAFIG), 420–440 (HAGLSLSIGLAACLNASLLYW), 456–476 (WFLMRLIISVLVMAAVLFGVL), and 494–514 (LMAVVIAGIAAYFAALAVLGF).

Belongs to the MurJ/MviN family.

Its subcellular location is the cell inner membrane. It participates in cell wall biogenesis; peptidoglycan biosynthesis. Its function is as follows. Involved in peptidoglycan biosynthesis. Transports lipid-linked peptidoglycan precursors from the inner to the outer leaflet of the cytoplasmic membrane. The chain is Probable lipid II flippase MurJ from Salmonella typhimurium (strain LT2 / SGSC1412 / ATCC 700720).